Consider the following 207-residue polypeptide: 8-oxoguanine DNA glycosylase/AP lyase (207 aa).

Residues lysine 128 and aspartate 146 contribute to the active site.

The protein belongs to the type-2 OGG1 family.

It catalyses the reaction 2'-deoxyribonucleotide-(2'-deoxyribose 5'-phosphate)-2'-deoxyribonucleotide-DNA = a 3'-end 2'-deoxyribonucleotide-(2,3-dehydro-2,3-deoxyribose 5'-phosphate)-DNA + a 5'-end 5'-phospho-2'-deoxyribonucleoside-DNA + H(+). Catalyzes the excision of an oxidatively damaged form of guanine (7,8-dihydro-8-oxoguanine = 8-oxoG) from DNA. Also cleaves the DNA backbone at apurinic/apyrimidinic sites (AP sites). The sequence is that of 8-oxoguanine DNA glycosylase/AP lyase from Saccharolobus islandicus (strain Y.N.15.51 / Yellowstone #2) (Sulfolobus islandicus).